The chain runs to 320 residues: Olfactory receptor 52W1 (320 aa).

At 1-30 the chain is on the extracellular side; that stretch reads MAETLQLNSTFLHPNFFILTGFPGLGSAQT. An N-linked (GlcNAc...) asparagine glycan is attached at N8. A helical membrane pass occupies residues 31 to 51; that stretch reads WLTLVFGPIYLLALLGNGALP. Over 52-59 the chain is Cytoplasmic; it reads AVVWIDST. A helical membrane pass occupies residues 60 to 80; sequence LHQPMFLLLAILAATDLGLAT. Over 81-104 the chain is Extracellular; sequence SIAPGLLAVLWLGPRSVPYAVCLV. The chain crosses the membrane as a helical span at residues 105-125; that stretch reads QMFFVHALTAMESGVLLAMAC. Residues 126–144 lie on the Cytoplasmic side of the membrane; that stretch reads DRAAAIGRPLHYPVLVTKA. Residues 145 to 165 traverse the membrane as a helical segment; that stretch reads CVGYAALALALKAVAIVVPFP. The Extracellular portion of the chain corresponds to 166-201; sequence LLVAKFEHFQAKTIGHTYCAHMAVVELVVGNTQATN. A helical membrane pass occupies residues 202–222; sequence LYGLALSLAISGMDILGITGS. The Cytoplasmic portion of the chain corresponds to 223–242; it reads YGLIAHAVLQLPTREAHAKA. Residues 243–263 traverse the membrane as a helical segment; that stretch reads FGTCSSHICVILAFYIPGLFS. Over 264 to 279 the chain is Extracellular; that stretch reads YLTHRFGHHTVPKPVH. The chain crosses the membrane as a helical span at residues 280 to 300; sequence ILLSNIYLLLPPALNPLIYGA. At 301–320 the chain is on the cytoplasmic side; that stretch reads RTKQIRDRLLETFTFRKSPL.

The protein belongs to the G-protein coupled receptor 1 family.

Its subcellular location is the cell membrane. In terms of biological role, odorant receptor. This Homo sapiens (Human) protein is Olfactory receptor 52W1 (OR52W1).